We begin with the raw amino-acid sequence, 309 residues long: Protein FdhE homolog (309 aa).

This sequence belongs to the FdhE family.

It localises to the cytoplasm. Necessary for formate dehydrogenase activity. In Citrobacter koseri (strain ATCC BAA-895 / CDC 4225-83 / SGSC4696), this protein is Protein FdhE homolog.